A 30-amino-acid polypeptide reads, in one-letter code: Hemocyanin subunit 2 (30 aa).

The protein belongs to the tyrosinase family. Hemocyanin subfamily. As to expression, hemolymph.

It is found in the secreted. Its subcellular location is the extracellular space. Hemocyanins are copper-containing oxygen carriers occurring freely dissolved in the hemolymph of many mollusks and arthropods. This Homarus americanus (American lobster) protein is Hemocyanin subunit 2.